Here is a 635-residue protein sequence, read N- to C-terminus: Probable Xaa-Pro aminopeptidase P (635 aa).

Aspartate 432, aspartate 443, glutamate 541, and glutamate 555 together coordinate Mn(2+).

Belongs to the peptidase M24B family. Mn(2+) is required as a cofactor.

It catalyses the reaction Release of any N-terminal amino acid, including proline, that is linked to proline, even from a dipeptide or tripeptide.. Functionally, catalyzes the removal of a penultimate prolyl residue from the N-termini of peptides. In Arthroderma gypseum (strain ATCC MYA-4604 / CBS 118893) (Microsporum gypseum), this protein is Probable Xaa-Pro aminopeptidase P (AMPP).